Here is a 753-residue protein sequence, read N- to C-terminus: Rsm22-cox11 tandem protein 1, mitochondrial (753 aa).

Residues 1–39 constitute a mitochondrion transit peptide; that stretch reads MPILTCRYKILFLYNLRNCFTFQNQRCLIPYGTTTTIRW. 4 residues coordinate [4Fe-4S] cluster: Cys-323, Cys-329, Cys-342, and Cys-430. The chain crosses the membrane as a helical span at residues 571-591; the sequence is IYYLVAISIFALGLTYAAVPL. Residues 592-753 lie on the Mitochondrial intermembrane side of the membrane; it reads YRLFCSKTGY…TNGNLLTKLN (162 aa).

It in the N-terminal section; belongs to the methyltransferase superfamily. Rsm22 family. The protein in the C-terminal section; belongs to the COX11/CtaG family. In terms of assembly, associates with the mitochondrial ribosome (mitoribosome). Only transiently interacts with the mitoribosome. Post-translationally, specific enzymatic cleavages in vivo by mitochondrial processing peptidase (MPP) yield mature proteins including rsm22-1 and cox11-1.

The protein localises to the mitochondrion. It is found in the mitochondrion inner membrane. In terms of biological role, mitochondrial ribosome (mitoribosome) assembly factor. Binds at the interface of the head and body domains of the mitochondrial small ribosomal subunit (mt-SSU), occluding the mRNA channel and preventing compaction of the head domain towards the body. Probable inactive methyltransferase: retains the characteristic folding and ability to bind S-adenosyl-L-methionine, but it probably lost its methyltransferase activity. Functionally, exerts its effect at some terminal stage of cytochrome c oxidase synthesis, probably by being involved in the insertion of the copper B into subunit I. This is Rsm22-cox11 tandem protein 1, mitochondrial (cox1101) from Schizosaccharomyces pombe (strain 972 / ATCC 24843) (Fission yeast).